Reading from the N-terminus, the 343-residue chain is Dihydroorotase (343 aa).

Zn(2+) is bound by residues His-13 and His-15. Substrate is bound by residues 15-17 and Asn-41; that span reads HLR. Positions 99, 136, and 174 each coordinate Zn(2+). N6-carboxylysine is present on Lys-99. His-136 provides a ligand contact to substrate. Leu-219 is a binding site for substrate. Residue Asp-247 coordinates Zn(2+). Asp-247 is an active-site residue. Residues His-251 and Ala-263 each coordinate substrate.

It belongs to the metallo-dependent hydrolases superfamily. DHOase family. Class II DHOase subfamily. Homodimer. Zn(2+) is required as a cofactor.

The catalysed reaction is (S)-dihydroorotate + H2O = N-carbamoyl-L-aspartate + H(+). Its pathway is pyrimidine metabolism; UMP biosynthesis via de novo pathway; (S)-dihydroorotate from bicarbonate: step 3/3. Functionally, catalyzes the reversible cyclization of carbamoyl aspartate to dihydroorotate. This chain is Dihydroorotase, found in Shewanella oneidensis (strain ATCC 700550 / JCM 31522 / CIP 106686 / LMG 19005 / NCIMB 14063 / MR-1).